A 328-amino-acid chain; its full sequence is UPF0194 membrane protein YPTS_1292 (328 aa).

Residues 1–22 (MNRKKIIVAAVIVALLATLAYG) form the signal peptide. Coiled coils occupy residues 80–109 (YLNALKQAQANVQSAQAQLALLKAGYREEE) and 142–209 (AVSA…ILLA).

It belongs to the UPF0194 family.

The protein localises to the periplasm. This Yersinia pseudotuberculosis serotype IB (strain PB1/+) protein is UPF0194 membrane protein YPTS_1292.